The chain runs to 341 residues: Protein MENT (341 aa).

Positions 1-23 (MVPAAGALLWVLLLNLGPRAAGA) are cleaved as a signal peptide. The interval 115 to 196 (AGKDSTSREL…SPSPTAMPSP (82 aa)) is disordered. A compositionally biased stretch (polar residues) spans 127 to 155 (ATPNTAGSSSTRFIANSQEPEIRLTSSLP).

In terms of processing, phosphorylation sites are present in the extracellular medium. As to expression, plasma. Overexpressed in lymphomas.

Its subcellular location is the secreted. Its function is as follows. Involved in control of cellular proliferation. Onconcogenic modifier contributing to the tumor suppressor function of DNMT3B. The sequence is that of Protein MENT (MENT) from Homo sapiens (Human).